The sequence spans 278 residues: 3-methyl-2-oxobutanoate hydroxymethyltransferase (278 aa).

Residues Asp43 and Asp82 each coordinate Mg(2+). Residues 43-44 (DS), Asp82, and Lys112 contribute to the 3-methyl-2-oxobutanoate site. A Mg(2+)-binding site is contributed by Glu114. Glu181 (proton acceptor) is an active-site residue.

This sequence belongs to the PanB family. In terms of assembly, homodecamer; pentamer of dimers. Mg(2+) is required as a cofactor.

It is found in the cytoplasm. The enzyme catalyses 3-methyl-2-oxobutanoate + (6R)-5,10-methylene-5,6,7,8-tetrahydrofolate + H2O = 2-dehydropantoate + (6S)-5,6,7,8-tetrahydrofolate. It functions in the pathway cofactor biosynthesis; (R)-pantothenate biosynthesis; (R)-pantoate from 3-methyl-2-oxobutanoate: step 1/2. Its function is as follows. Catalyzes the reversible reaction in which hydroxymethyl group from 5,10-methylenetetrahydrofolate is transferred onto alpha-ketoisovalerate to form ketopantoate. The chain is 3-methyl-2-oxobutanoate hydroxymethyltransferase from Bacillus cereus (strain AH187).